Reading from the N-terminus, the 245-residue chain is Probable phosphatase Spro_1934 (245 aa).

The Zn(2+) site is built by His7, His9, His15, His40, Glu73, His101, His131, Asp192, and His194.

The protein belongs to the PHP family. In terms of assembly, homotrimer. The cofactor is Zn(2+).

This is Probable phosphatase Spro_1934 from Serratia proteamaculans (strain 568).